A 348-amino-acid polypeptide reads, in one-letter code: Sulfate/thiosulfate import ATP-binding protein CysA (348 aa).

One can recognise an ABC transporter domain in the interval 3–237 (IEVRNIVKEF…PASAFVHGFI (235 aa)). Position 35 to 42 (35 to 42 (GPSGSGKT)) interacts with ATP.

The protein belongs to the ABC transporter superfamily. Sulfate/tungstate importer (TC 3.A.1.6) family. In terms of assembly, the complex is composed of two ATP-binding proteins (CysA), two transmembrane proteins (CysT and CysW) and a solute-binding protein (CysP).

Its subcellular location is the cell inner membrane. It catalyses the reaction sulfate(out) + ATP + H2O = sulfate(in) + ADP + phosphate + H(+). The catalysed reaction is thiosulfate(out) + ATP + H2O = thiosulfate(in) + ADP + phosphate + H(+). Functionally, part of the ABC transporter complex CysAWTP involved in sulfate/thiosulfate import. Responsible for energy coupling to the transport system. The protein is Sulfate/thiosulfate import ATP-binding protein CysA of Rhodopseudomonas palustris (strain ATCC BAA-98 / CGA009).